The sequence spans 349 residues: Histone-lysine N-methyltransferase ATXR6 (349 aa).

The disordered stretch occupies residues 1-28 (MVAVRRRRTQASNPRSEPPQHMSDHDSD). The PHD-type zinc-finger motif lies at 32 to 82 (DTVCEECSSGKQPAKLLLCDKCDKGFHLFCLRPILVSVPKGSWFCPSCSKH). Positions 92–99 (QTKIIDFF) match the PIP motif motif. The disordered stretch occupies residues 105 to 126 (PDSSQISSSSDSIGKKRKKTSL). The segment covering 106–116 (DSSQISSSSDS) has biased composition (low complexity). Methionine 190 serves as a coordination point for substrate. In terms of domain architecture, SET spans 214–337 (PPLMVVFDPY…KGERLYYDYN (124 aa)). S-adenosyl-L-methionine contacts are provided by residues 224 to 226 (EGF) and 287 to 291 (RFISG). Residues arginine 309 and 339–340 (YE) contribute to the substrate site. 2 residues coordinate S-adenosyl-L-methionine: tyrosine 343 and valine 349.

This sequence belongs to the class V-like SAM-binding methyltransferase superfamily. Histone-lysine methyltransferase family. TRX/MLL subfamily. Interacts with PCNA1 and PCNA2. Interacts (via PHD domain) with HTR1 (via N-terminus). Interacts with IPS1. As to expression, expressed in leaves, roots, stems, flowers and siliques. Up-regulated in tissues where cell division is active.

It localises to the nucleus. The catalysed reaction is L-lysyl(27)-[histone H3] + S-adenosyl-L-methionine = N(6)-methyl-L-lysyl(27)-[histone H3] + S-adenosyl-L-homocysteine + H(+). In terms of biological role, histone methyltransferase that specifically monomethylates 'Lys-27' of histone H3 (H3K27me1). Has higher activity on nucleosomes containing H3.1 than H3.3. Involved in the formation of constitutive heterochromatin and the silencing of heterochromatic elements. May act as a positive regulator of the G1-S transition. Influences which sets of rRNA gene variants are expressed or silenced. Up-regulated by E2FB. This is Histone-lysine N-methyltransferase ATXR6 (ATXR6) from Arabidopsis thaliana (Mouse-ear cress).